The sequence spans 379 residues: S-adenosylmethionine decarboxylase proenzyme (379 aa).

Active-site residues include E30 and E33. The active-site Schiff-base intermediate with substrate; via pyruvic acid is the S96. The residue at position 96 (S96) is a Pyruvic acid (Ser); by autocatalysis. The active-site Proton donor; for catalytic activity is C110. Catalysis depends on proton acceptor; for processing activity residues S254 and H267.

Belongs to the eukaryotic AdoMetDC family. Heterotetramer of two alpha and two beta chains. It depends on pyruvate as a cofactor. Post-translationally, is synthesized initially as an inactive proenzyme. Formation of the active enzyme involves a self-maturation process in which the active site pyruvoyl group is generated from an internal serine residue via an autocatalytic post-translational modification. Two non-identical subunits are generated from the proenzyme in this reaction, and the pyruvate is formed at the N-terminus of the alpha chain, which is derived from the carboxyl end of the proenzyme. The post-translation cleavage follows an unusual pathway, termed non-hydrolytic serinolysis, in which the side chain hydroxyl group of the serine supplies its oxygen atom to form the C-terminus of the beta chain, while the remainder of the serine residue undergoes an oxidative deamination to produce ammonia and the pyruvoyl group blocking the N-terminus of the alpha chain.

It carries out the reaction S-adenosyl-L-methionine + H(+) = S-adenosyl 3-(methylsulfanyl)propylamine + CO2. It participates in amine and polyamine biosynthesis; S-adenosylmethioninamine biosynthesis; S-adenosylmethioninamine from S-adenosyl-L-methionine: step 1/1. Functionally, S-adenosylmethionine decarboxylase is essential for the biosynthesis of spermine and spermidine. The alpha subunit contains the active site. This is S-adenosylmethionine decarboxylase proenzyme (amd1) from Dictyostelium discoideum (Social amoeba).